We begin with the raw amino-acid sequence, 180 residues long: MFDAHSTTILSVRRGNHVAIAGDGQVSLGQTIMKGNARKIRRLYHDQILAGFAGATADAFTLFELFEGKLEAQDGQLLRAAVEMAKEWRTDRSLRRLEAMLIVADRNNTLILSGNGDIVEPENSLAAIGSGGMYALAAARALYHNTEMDALSIAEKSLNIAADICIYTNHNIVSDELKDA.

Thr-7 is a catalytic residue. The Na(+) site is built by Ala-162, Cys-165, and Thr-168.

This sequence belongs to the peptidase T1B family. HslV subfamily. In terms of assembly, a double ring-shaped homohexamer of HslV is capped on each side by a ring-shaped HslU homohexamer. The assembly of the HslU/HslV complex is dependent on binding of ATP.

The protein resides in the cytoplasm. The enzyme catalyses ATP-dependent cleavage of peptide bonds with broad specificity.. With respect to regulation, allosterically activated by HslU binding. Protease subunit of a proteasome-like degradation complex believed to be a general protein degrading machinery. The sequence is that of ATP-dependent protease subunit HslV from Dichelobacter nodosus (strain VCS1703A).